The following is a 497-amino-acid chain: Angiopoietin-1 (497 aa).

Positions 1–19 (MTVFLSFAFFAAILTHIGC) are cleaved as a signal peptide. Residues 81 to 119 (QKLQHLEHVMENYTQWLQKLENYIVENMKSEMAQIQQNA) adopt a coiled-coil conformation. N-linked (GlcNAc...) asparagine glycans are attached at residues Asn92, Asn122, Asn154, Asn243, and Asn294. Residues 153–261 (LNQTSRLEIQ…LELMDTVHNL (109 aa)) adopt a coiled-coil conformation. Residues 276–496 (REEEKPFRDC…STTMMIRPLD (221 aa)) enclose the Fibrinogen C-terminal domain. 2 disulfide bridges follow: Cys285–Cys314 and Cys438–Cys451.

Homooligomer. Interacts with TEK/TIE2. Interacts with SVEP1/polydom. Interacts with THBD; this interaction significantly inhibits the generation of activated PC and TAFIa/CPB2 by the thrombin/thrombomodulin complex.

The protein localises to the secreted. Its function is as follows. Binds and activates TIE2 receptor by inducing its tyrosine phosphorylation. Implicated in endothelial developmental processes later and distinct from that of VEGF. Appears to play a crucial role in mediating reciprocal interactions between the endothelium and surrounding matrix and mesenchyme. Mediates blood vessel maturation/stability. It may play an important role in the heart early development. This is Angiopoietin-1 (Angpt1) from Rattus norvegicus (Rat).